We begin with the raw amino-acid sequence, 367 residues long: Aminomethyltransferase (367 aa).

It belongs to the GcvT family. In terms of assembly, the glycine cleavage system is composed of four proteins: P, T, L and H.

The enzyme catalyses N(6)-[(R)-S(8)-aminomethyldihydrolipoyl]-L-lysyl-[protein] + (6S)-5,6,7,8-tetrahydrofolate = N(6)-[(R)-dihydrolipoyl]-L-lysyl-[protein] + (6R)-5,10-methylene-5,6,7,8-tetrahydrofolate + NH4(+). Functionally, the glycine cleavage system catalyzes the degradation of glycine. The protein is Aminomethyltransferase of Shouchella clausii (strain KSM-K16) (Alkalihalobacillus clausii).